Here is a 155-residue protein sequence, read N- to C-terminus: RNA-binding protein 3 (155 aa).

Positions 6–84 (GKLFVGGLNF…RQIRVDHAGK (79 aa)) constitute an RRM domain. Arg-47 carries the post-translational modification Omega-N-methylarginine. Residues 79 to 155 (VDHAGKSARG…GGNYRDNYDN (77 aa)) are disordered. An Asymmetric dimethylarginine; alternate modification is found at Arg-105. The residue at position 105 (Arg-105) is a Dimethylated arginine; alternate. Arg-105 bears the Omega-N-methylarginine; alternate mark. The span at 105 to 114 (RGGGDQGYGS) shows a compositional bias: gly residues. An omega-N-methylarginine mark is found at Arg-120 and Arg-130. Phosphoserine occurs at positions 135 and 145. Tyr-153 carries the post-translational modification Phosphotyrosine.

Interacts with RPL4. Associates with the 60S ribosomal subunits. Arg-105 is dimethylated, probably to asymmetric dimethylarginine. Post-translationally, phosphorylated. Isoform 2 is methylated. In terms of tissue distribution, widely expressed in the brain. Highly expressed in the cerebellum and olfactory bulb (at protein level). Expressed in neurons and glial cells.

The protein localises to the nucleus. The protein resides in the cytoplasm. Its subcellular location is the cell projection. It is found in the dendrite. In terms of biological role, cold-inducible mRNA binding protein that enhances global protein synthesis at both physiological and mild hypothermic temperatures. Reduces the relative abundance of microRNAs, when overexpressed. Enhances phosphorylation of translation initiation factors and active polysome formation. In Rattus norvegicus (Rat), this protein is RNA-binding protein 3 (Rbm3).